A 223-amino-acid chain; its full sequence is Ethylene-inducing xylanase 1 (223 aa).

Residues 1-19 form the signal peptide; the sequence is MVSFTSLLAAFSVVSGVLT. In terms of domain architecture, GH11 spans 34 to 223; the sequence is KRTPSSTGTS…SSGSATMTVS (190 aa). Residue Glu119 is the Nucleophile of the active site. Residues 174–184 are nuclear localization signal; it reads RRTKRTSGSVN. Residue Glu210 is the Proton donor of the active site.

This sequence belongs to the glycosyl hydrolase 11 (cellulase G) family.

The protein localises to the secreted. Its subcellular location is the host nucleus. The catalysed reaction is Endohydrolysis of (1-&gt;4)-beta-D-xylosidic linkages in xylans.. It functions in the pathway glycan degradation; xylan degradation. In terms of biological role, endo-1,4-beta-xylanase involved in the hydrolysis of xylan, a major structural heterogeneous polysaccharide found in plant biomass representing the second most abundant polysaccharide in the biosphere, after cellulose. Acts as an effector that localizes to the host nucleus to contribute to the virulence process. Induces host innate immunity responses; triggers BAK1-and SOBIR1-dependent cell death, salicylic acid signaling and jasmonic acid signaling. Does not exhibit any cell death when transiently expressed in N.benthamiana. The polypeptide is Ethylene-inducing xylanase 1 (Verticillium dahliae (strain VdLs.17 / ATCC MYA-4575 / FGSC 10137) (Verticillium wilt)).